Reading from the N-terminus, the 555-residue chain is Solute carrier family 22 member 2 (555 aa).

The Cytoplasmic portion of the chain corresponds to 1–22 (MPTTVDDVLEHGGEFHFFQKQM). The helical transmembrane segment at 23-43 (FFLLALLSATFAPIYVGIVFL) threads the bilayer. Over 44–150 (GFTPDHRCRS…LVCANSWMLD (107 aa)) the chain is Extracellular. N-linked (GlcNAc...) asparagine glycosylation is present at Asn72. Residues 151 to 171 (LFQSSVNVGFFIGSMSIGYIA) form a helical membrane-spanning segment. Topologically, residues 172 to 177 (DRFGRK) are cytoplasmic. A helical transmembrane segment spans residues 178 to 198 (LCLLTTVLINAAAGVLMAISP). Over 199-208 (TYTWMLIFRL) the chain is Extracellular. A helical membrane pass occupies residues 209–229 (IQGLVSKAGWLIGYILITEFV). Over 230–238 (GRRYRRTVG) the chain is Cytoplasmic. A helical membrane pass occupies residues 239 to 259 (IFYQVAYTVGLLVLAGVAYAL). Residues 260-263 (PHWR) are Extracellular-facing. Residues 264-284 (WLQFTVSLPNFFFLLYYWCIP) form a helical membrane-spanning segment. A Proline-rich sequence motif is present at residues 284–288 (PESPR). At 285–348 (ESPRWLISQN…VRTPQIRKHT (64 aa)) the chain is on the cytoplasmic side. A helical membrane pass occupies residues 349-369 (MILMYNWFTSSVLYQGLIMHM). The Extracellular portion of the chain corresponds to 370–375 (GLAGDN). A helical transmembrane segment spans residues 376–396 (IYLDFFYSALVEFPAAFMIIL). Topologically, residues 397–414 (TIDRIGRRYPWAASNMVA) are cytoplasmic. A helical transmembrane segment spans residues 415–435 (GAACLASVFIPGDLQWLKIII). Topologically, residues 436–441 (SCLGRM) are extracellular. The chain crosses the membrane as a helical span at residues 442–462 (GITMAYEIVCLVNAELYPTFI). Residues 463–464 (RN) are Cytoplasmic-facing. A helical transmembrane segment spans residues 465 to 485 (LGVHICSSMCDIGGIITPFLV). Residues 486-494 (YRLTNIWLE) are Extracellular-facing. The helical transmembrane segment at 495–515 (LPLMVFGVLGLVAGGLVLLLP) threads the bilayer. At 516–555 (ETKGKALPETIEEAENMQRPRKNKEKMIYLQVQKLDIPLN) the chain is on the cytoplasmic side.

This sequence belongs to the major facilitator (TC 2.A.1) superfamily. Organic cation transporter (TC 2.A.1.19) family. In terms of processing, tyrosine phosphorylated by tyrosine-protein kinase YES1. Mainly expressed in kidney, in the cortex and medulla. Localized in testis, mostly to peritubular myoid cells and Leydig cells and also detected along the basal membrane of Sertoli cells. Expressed in brain, in neurons of the cerebral cortex and in various subcortical nuclei. In the brain, also detected in the dopaminergic regions of the substantia nigra. Expressed in tracheal and bronchial ciliated epithelium in the respiratory tract. Also detected in secretory phase endometrium, in scattered stromal cells. Expressed in spleen, placenta, small intestine and spinal cord. Weakly expressed in prostate, uterus and lung. As to expression, mainly expressed in kidney, bone marrow and testis. Expressed in colon, skeletal muscle, spinal cord, placenta and liver.

It localises to the basolateral cell membrane. It is found in the basal cell membrane. The protein resides in the apical cell membrane. The catalysed reaction is (R)-noradrenaline(out) = (R)-noradrenaline(in). The enzyme catalyses (R)-adrenaline(out) = (R)-adrenaline(in). It catalyses the reaction serotonin(out) = serotonin(in). It carries out the reaction dopamine(out) = dopamine(in). The catalysed reaction is histamine(out) = histamine(in). The enzyme catalyses thiamine(in) = thiamine(out). It catalyses the reaction creatinine(in) = creatinine(out). It carries out the reaction 1-methylnicotinamide(out) = 1-methylnicotinamide(in). The catalysed reaction is guanidine(out) = guanidine(in). The enzyme catalyses choline(out) = choline(in). It catalyses the reaction agmatine(out) = agmatine(in). It carries out the reaction putrescine(out) = putrescine(in). The catalysed reaction is spermidine(in) = spermidine(out). The enzyme catalyses tyramine(in) = tyramine(out). It catalyses the reaction L-histidyl-L-proline diketopiperazine(in) = L-histidyl-L-proline diketopiperazine(out). It carries out the reaction (R)-salsolinol(in) = (R)-salsolinol(out). The catalysed reaction is N-methyl-(R)-salsolinol(in) = N-methyl-(R)-salsolinol(out). The enzyme catalyses acetylcholine(in) = acetylcholine(out). It catalyses the reaction prostaglandin F2alpha(out) = prostaglandin F2alpha(in). It carries out the reaction prostaglandin E2(out) = prostaglandin E2(in). Its activity is regulated as follows. Tyrosine phosphorylation of the transporter leads to activation of the transport activity. TEA uptake is activated by tyrosine phosphorylation. Inhibited by cGMP, most likely through a cGMP-binding protein that interacts with OCT2. In terms of biological role, electrogenic voltage-dependent transporter that mediates the transport of a variety of organic cations such as endogenous bioactive amines, cationic drugs and xenobiotics. Functions as a Na(+)-independent, bidirectional uniporter. Cation cellular uptake or release is driven by the electrochemical potential, i.e. membrane potential and concentration gradient. However, may also engage electroneutral cation exchange when saturating concentrations of cation substrates are reached. Predominantly expressed at the basolateral membrane of hepatocytes and proximal tubules and involved in the uptake and disposition of cationic compounds by hepatic and renal clearance from the blood flow. Implicated in monoamine neurotransmitters uptake such as histamine, dopamine, adrenaline/epinephrine, noradrenaline/norepinephrine, serotonin and tyramine, thereby supporting a physiological role in the central nervous system by regulating interstitial concentrations of neurotransmitters. Also capable of transporting dopaminergic neuromodulators cyclo(his-pro), salsolinol and N-methyl-salsolinol, thereby involved in the maintenance of dopaminergic cell integrity in the central nervous system. Mediates the bidirectional transport of acetylcholine (ACh) at the apical membrane of ciliated cell in airway epithelium, thereby playing a role in luminal release of ACh from bronchial epithelium. Also transports guanidine and endogenous monoamines such as vitamin B1/thiamine, creatinine and N-1-methylnicotinamide (NMN). Mediates the uptake and efflux of quaternary ammonium compound choline. Mediates the bidirectional transport of polyamine agmatine and the uptake of polyamines putrescine and spermidine. Able to transport non-amine endogenous compounds such as prostaglandin E2 (PGE2) and prostaglandin F2-alpha (PGF2-alpha). Also involved in the uptake of xenobiotic 4-(4-(dimethylamino)styryl)-N-methylpyridinium (ASP). May contribute to regulate the transport of organic compounds in testis across the blood-testis-barrier. Its function is as follows. In contrast with isoform 1, not able to transport guanidine, creatinine, cimetidine and metformin. The sequence is that of Solute carrier family 22 member 2 from Homo sapiens (Human).